The primary structure comprises 357 residues: Protein RecA (357 aa).

ATP is bound at residue 69 to 76 (GPESSGKT). Positions 337-357 (SANSVAKNNEDDEDEDVEEEE) are disordered. Positions 346–357 (EDDEDEDVEEEE) are enriched in acidic residues.

This sequence belongs to the RecA family.

The protein resides in the cytoplasm. Can catalyze the hydrolysis of ATP in the presence of single-stranded DNA, the ATP-dependent uptake of single-stranded DNA by duplex DNA, and the ATP-dependent hybridization of homologous single-stranded DNAs. It interacts with LexA causing its activation and leading to its autocatalytic cleavage. The chain is Protein RecA from Nostoc sp. (strain PCC 7120 / SAG 25.82 / UTEX 2576).